The following is a 238-amino-acid chain: Phosphoribosylaminoimidazole-succinocarboxamide synthase (238 aa).

The protein belongs to the SAICAR synthetase family.

The enzyme catalyses 5-amino-1-(5-phospho-D-ribosyl)imidazole-4-carboxylate + L-aspartate + ATP = (2S)-2-[5-amino-1-(5-phospho-beta-D-ribosyl)imidazole-4-carboxamido]succinate + ADP + phosphate + 2 H(+). The protein operates within purine metabolism; IMP biosynthesis via de novo pathway; 5-amino-1-(5-phospho-D-ribosyl)imidazole-4-carboxamide from 5-amino-1-(5-phospho-D-ribosyl)imidazole-4-carboxylate: step 1/2. This is Phosphoribosylaminoimidazole-succinocarboxamide synthase from Persephonella marina (strain DSM 14350 / EX-H1).